The sequence spans 423 residues: Ornithine cyclodeaminase (423 aa).

Residues Asn241, Ala242, Asp320, Thr352, Met353, Leu354, His355, Asp373, Asp396, and Val397 each coordinate NAD(+).

Belongs to the AgrE/ArgZ ornithine cyclodeaminase family. Requires NAD(+) as cofactor.

It carries out the reaction L-ornithine = L-proline + NH4(+). Functionally, catalyzes the conversion of ornithine to proline, with the release of ammonia. The sequence is that of Ornithine cyclodeaminase from Methanocaldococcus jannaschii (strain ATCC 43067 / DSM 2661 / JAL-1 / JCM 10045 / NBRC 100440) (Methanococcus jannaschii).